The sequence spans 335 residues: Auxin-responsive protein IAA6 (335 aa).

The EAR-like (transcriptional repression) motif lies at L51–L55. Disordered stretches follow at residues L81–R102, K143–P180, and N188–N207. The PB1 domain maps to N217–S321.

It belongs to the Aux/IAA family. As to quaternary structure, homodimers and heterodimers. Highly expressed in roots. Expressed in shoots and flowers.

It localises to the nucleus. Its function is as follows. Aux/IAA proteins are short-lived transcriptional factors that function as repressors of early auxin response genes at low auxin concentrations. The chain is Auxin-responsive protein IAA6 (IAA6) from Oryza sativa subsp. japonica (Rice).